The following is a 149-amino-acid chain: Transcriptional repressor NrdR (149 aa).

The segment at 3–34 (CPFCAAVDTKVIDSRLVGDGSQVRRRRQCLEC) is a zinc-finger region. The region spanning 49–139 (PRVIKSDDIR…VYRSFEDIRE (91 aa)) is the ATP-cone domain.

This sequence belongs to the NrdR family. The cofactor is Zn(2+).

Functionally, negatively regulates transcription of bacterial ribonucleotide reductase nrd genes and operons by binding to NrdR-boxes. This chain is Transcriptional repressor NrdR, found in Photorhabdus laumondii subsp. laumondii (strain DSM 15139 / CIP 105565 / TT01) (Photorhabdus luminescens subsp. laumondii).